The primary structure comprises 446 residues: tRNA-2-methylthio-N(6)-dimethylallyladenosine synthase (446 aa).

The MTTase N-terminal domain occupies 8–124 (KTYRVKSFGC…LPGMIDAAVA (117 aa)). Cysteine 17, cysteine 53, cysteine 87, cysteine 160, cysteine 164, and cysteine 167 together coordinate [4Fe-4S] cluster. Residues 146-378 (RKSAPSAFLT…QAALNRDQAA (233 aa)) enclose the Radical SAM core domain. The TRAM domain occupies 381–442 (AGSVGRTCEV…PNSLAGQLLE (62 aa)).

This sequence belongs to the methylthiotransferase family. MiaB subfamily. As to quaternary structure, monomer. The cofactor is [4Fe-4S] cluster.

It localises to the cytoplasm. The enzyme catalyses N(6)-dimethylallyladenosine(37) in tRNA + (sulfur carrier)-SH + AH2 + 2 S-adenosyl-L-methionine = 2-methylsulfanyl-N(6)-dimethylallyladenosine(37) in tRNA + (sulfur carrier)-H + 5'-deoxyadenosine + L-methionine + A + S-adenosyl-L-homocysteine + 2 H(+). In terms of biological role, catalyzes the methylthiolation of N6-(dimethylallyl)adenosine (i(6)A), leading to the formation of 2-methylthio-N6-(dimethylallyl)adenosine (ms(2)i(6)A) at position 37 in tRNAs that read codons beginning with uridine. This Erythrobacter litoralis (strain HTCC2594) protein is tRNA-2-methylthio-N(6)-dimethylallyladenosine synthase.